The sequence spans 249 residues: 2,3-bisphosphoglycerate-dependent phosphoglycerate mutase (249 aa).

Substrate contacts are provided by residues 11–18, 24–25, R63, 90–93, K101, 117–118, and 184–185; these read RHGESDWN, TG, ERHY, RR, and GN. H12 (tele-phosphohistidine intermediate) is an active-site residue. E90 (proton donor/acceptor) is an active-site residue.

Belongs to the phosphoglycerate mutase family. BPG-dependent PGAM subfamily.

The enzyme catalyses (2R)-2-phosphoglycerate = (2R)-3-phosphoglycerate. It functions in the pathway carbohydrate degradation; glycolysis; pyruvate from D-glyceraldehyde 3-phosphate: step 3/5. In terms of biological role, catalyzes the interconversion of 2-phosphoglycerate and 3-phosphoglycerate. In Mycobacterium bovis (strain BCG / Pasteur 1173P2), this protein is 2,3-bisphosphoglycerate-dependent phosphoglycerate mutase.